Consider the following 301-residue polypeptide: UDP-N-acetylenolpyruvoylglucosamine reductase (301 aa).

The region spanning 30-194 is the FAD-binding PCMH-type domain; the sequence is VGGEADYLVF…LSVKFALAPG (165 aa). Arg173 is a catalytic residue. Ser223 functions as the Proton donor in the catalytic mechanism. Glu293 is an active-site residue.

It belongs to the MurB family. Requires FAD as cofactor.

The protein resides in the cytoplasm. It carries out the reaction UDP-N-acetyl-alpha-D-muramate + NADP(+) = UDP-N-acetyl-3-O-(1-carboxyvinyl)-alpha-D-glucosamine + NADPH + H(+). It participates in cell wall biogenesis; peptidoglycan biosynthesis. In terms of biological role, cell wall formation. The protein is UDP-N-acetylenolpyruvoylglucosamine reductase of Streptococcus pneumoniae (strain 70585).